A 363-amino-acid polypeptide reads, in one-letter code: Ribosomal RNA large subunit methyltransferase M (363 aa).

S-adenosyl-L-methionine contacts are provided by residues Ser194, 227–230 (CPGG), Asp246, Asp266, and Asp284. Lys313 serves as the catalytic Proton acceptor.

This sequence belongs to the class I-like SAM-binding methyltransferase superfamily. RNA methyltransferase RlmE family. RlmM subfamily. Monomer.

It is found in the cytoplasm. It carries out the reaction cytidine(2498) in 23S rRNA + S-adenosyl-L-methionine = 2'-O-methylcytidine(2498) in 23S rRNA + S-adenosyl-L-homocysteine + H(+). Catalyzes the 2'-O-methylation at nucleotide C2498 in 23S rRNA. The protein is Ribosomal RNA large subunit methyltransferase M of Haemophilus influenzae (strain PittGG).